Reading from the N-terminus, the 334-residue chain is Procathepsin L (334 aa).

An N-terminal signal peptide occupies residues 1–17 (MNLLLLLAVLCLGTALA). A propeptide spans 18–113 (TPKFDQTFSA…RLFQEPLMLK (96 aa)) (activation peptide). E122 is a Zn(2+) binding site. 2 cysteine pairs are disulfide-bonded: C135/C178 and C169/C211. C138 is an active-site residue. Residues E163, D184, E199, and E205 each coordinate Zn(2+). N-linked (GlcNAc...) (high mannose) asparagine glycosylation is present at N221. D227, D250, H253, and D275 together coordinate Zn(2+). C269 and C322 are disulfide-bonded. Residue H276 is part of the active site. Positions 289–290 (DS) are excised as a propeptide. Residue N300 is part of the active site.

The protein belongs to the peptidase C1 family. As to quaternary structure, dimer of a heavy and a light chain linked by disulfide bonds. Interacts with Long isoform of CD74/Ii chain; the interaction stabilizes the conformation of mature CTSL. In terms of processing, during export along the endocytic pathway, pro-CTSL undergoes several proteolytic cleavages to generate the CTSL single-chain and two-chain mature forms, composed of a heavy chain linked to a light chain by disulfide bonds. Autocleavage; produces the single-chain CTSL after cleavage of the propeptide. The cleavage can be intermolecular. In terms of tissue distribution, expressed in thymus, kidney and liver. Expressed in thyroid epithelial cells. Expressed in cortical thymic epithelial cells. Expressed by antigen presenting cells (APCs) such as dendritic cells and macrophages.

It is found in the lysosome. The protein resides in the apical cell membrane. It localises to the secreted. Its subcellular location is the extracellular space. The protein localises to the cytoplasmic vesicle. It is found in the secretory vesicle. The protein resides in the chromaffin granule. The enzyme catalyses Specificity close to that of papain. As compared to cathepsin B, cathepsin L exhibits higher activity toward protein substrates, but has little activity on Z-Arg-Arg-NHMec, and no peptidyl-dipeptidase activity.. Its activity is regulated as follows. Long isoform of CD74/Ii chain stabilizes the conformation of mature CTSL by binding to its active site and serving as a chaperone to help maintain a pool of mature enzyme in endocytic compartments and extracellular space of APCs. IFNG enhances the conversion into the CTSL mature and active form. Inhibited by CST6. Inhibited by the glycopeptide antibiotic teicoplanin. Inhibited by amantadine. In terms of biological role, thiol protease important for the overall degradation of proteins in lysosomes. Involved in the solubilization of cross-linked TG/thyroglobulin and in the subsequent release of thyroid hormone thyroxine (T4) by limited proteolysis of TG/thyroglobulin in the thyroid follicle lumen. In neuroendocrine chromaffin cells secretory vesicles, catalyzes the prohormone proenkephalin processing to the active enkephalin peptide neurotransmitter. In thymus, regulates CD4(+) T cell positive selection by generating the major histocompatibility complex class II (MHCII) bound peptide ligands presented by cortical thymic epithelial cells. Also mediates invariant chain processing in cortical thymic epithelial cells. Major elastin-degrading enzyme at neutral pH. Accumulates as a mature and active enzyme in the extracellular space of antigen presenting cells (APCs) to regulate degradation of the extracellular matrix in the course of inflammation. Secreted form generates endostatin from COL18A1. Critical for cardiac morphology and function. Plays an important role in hair follicle morphogenesis and cycling, as well as epidermal differentiation. Required for maximal stimulation of steroidogenesis by TIMP1. In Mus musculus (Mouse), this protein is Procathepsin L.